An 86-amino-acid chain; its full sequence is Putative defensin-like protein 9 (86 aa).

The signal sequence occupies residues 1–29 (MKSSMQLISTLFFLVILVVAPGMKMVVEG). Position 30 is a pyrrolidone carboxylic acid (Gln30). Cystine bridges form between Cys34–Cys79, Cys45–Cys65, Cys51–Cys73, and Cys55–Cys75.

Belongs to the DEFL family.

It is found in the secreted. The chain is Putative defensin-like protein 9 (LCR76) from Arabidopsis thaliana (Mouse-ear cress).